Here is a 441-residue protein sequence, read N- to C-terminus: Protein SPMIP7 (441 aa).

Testis specific. Expressed at the spermatid stage.

In terms of biological role, essential for normal spermatogenesis. This is Protein SPMIP7 (Spmip7) from Mus musculus (Mouse).